Here is a 444-residue protein sequence, read N- to C-terminus: Methylenetetrahydrofolate--tRNA-(uracil-5-)-methyltransferase TrmFO (444 aa).

An FAD-binding site is contributed by 9 to 14 (GAGMAG).

This sequence belongs to the MnmG family. TrmFO subfamily. The cofactor is FAD.

Its subcellular location is the cytoplasm. It carries out the reaction uridine(54) in tRNA + (6R)-5,10-methylene-5,6,7,8-tetrahydrofolate + NADH + H(+) = 5-methyluridine(54) in tRNA + (6S)-5,6,7,8-tetrahydrofolate + NAD(+). It catalyses the reaction uridine(54) in tRNA + (6R)-5,10-methylene-5,6,7,8-tetrahydrofolate + NADPH + H(+) = 5-methyluridine(54) in tRNA + (6S)-5,6,7,8-tetrahydrofolate + NADP(+). Catalyzes the folate-dependent formation of 5-methyl-uridine at position 54 (M-5-U54) in all tRNAs. In Cereibacter sphaeroides (strain KD131 / KCTC 12085) (Rhodobacter sphaeroides), this protein is Methylenetetrahydrofolate--tRNA-(uracil-5-)-methyltransferase TrmFO.